The sequence spans 356 residues: 1-deoxy-D-xylulose 5-phosphate reductoisomerase (356 aa).

Residues Thr-7, Gly-8, Ser-9, Ile-10, Gly-31, Asn-33, and Asn-111 each contribute to the NADPH site. A 1-deoxy-D-xylulose 5-phosphate-binding site is contributed by Lys-112. Glu-113 contacts NADPH. Asp-131 serves as a coordination point for Mn(2+). Ser-132, Glu-133, Ser-155, and His-178 together coordinate 1-deoxy-D-xylulose 5-phosphate. Mn(2+) is bound at residue Glu-133. Position 184 (Gly-184) interacts with NADPH. Ser-191, Asn-196, Lys-197, and Glu-200 together coordinate 1-deoxy-D-xylulose 5-phosphate. Glu-200 contacts Mn(2+).

The protein belongs to the DXR family. Requires Mg(2+) as cofactor. Mn(2+) is required as a cofactor.

It carries out the reaction 2-C-methyl-D-erythritol 4-phosphate + NADP(+) = 1-deoxy-D-xylulose 5-phosphate + NADPH + H(+). Its pathway is isoprenoid biosynthesis; isopentenyl diphosphate biosynthesis via DXP pathway; isopentenyl diphosphate from 1-deoxy-D-xylulose 5-phosphate: step 1/6. Its function is as follows. Catalyzes the NADPH-dependent rearrangement and reduction of 1-deoxy-D-xylulose-5-phosphate (DXP) to 2-C-methyl-D-erythritol 4-phosphate (MEP). The protein is 1-deoxy-D-xylulose 5-phosphate reductoisomerase of Campylobacter jejuni subsp. jejuni serotype O:23/36 (strain 81-176).